Consider the following 453-residue polypeptide: Kynureninase (453 aa).

Pyridoxal 5'-phosphate contacts are provided by residues leucine 111, threonine 112, 139–142, serine 196, aspartate 226, histidine 229, and tyrosine 251; that span reads FPSD. Lysine 252 bears the N6-(pyridoxal phosphate)lysine mark. Residues tryptophan 286 and asparagine 314 each coordinate pyridoxal 5'-phosphate.

It belongs to the kynureninase family. As to quaternary structure, homodimer. The cofactor is pyridoxal 5'-phosphate.

Its subcellular location is the cytoplasm. It localises to the nucleus. It catalyses the reaction L-kynurenine + H2O = anthranilate + L-alanine + H(+). The enzyme catalyses 3-hydroxy-L-kynurenine + H2O = 3-hydroxyanthranilate + L-alanine + H(+). It functions in the pathway amino-acid degradation; L-kynurenine degradation; L-alanine and anthranilate from L-kynurenine: step 1/1. It participates in cofactor biosynthesis; NAD(+) biosynthesis; quinolinate from L-kynurenine: step 2/3. Functionally, catalyzes the cleavage of L-kynurenine (L-Kyn) and L-3-hydroxykynurenine (L-3OHKyn) into anthranilic acid (AA) and 3-hydroxyanthranilic acid (3-OHAA), respectively. In Saccharomyces cerevisiae (strain ATCC 204508 / S288c) (Baker's yeast), this protein is Kynureninase.